The following is a 460-amino-acid chain: Muscarinic acetylcholine receptor M1 (460 aa).

Residues 1-22 are Extracellular-facing; sequence MNTSAPPAVSPNITVLAPGKGP. N-linked (GlcNAc...) asparagine glycosylation is found at Asn-2 and Asn-12. Residues 23–48 form a helical membrane-spanning segment; it reads WQVAFIGITTGLLSLATVTGNLLVLI. At 49–62 the chain is on the cytoplasmic side; it reads SFKVNTELKTVNNY. The chain crosses the membrane as a helical span at residues 63-84; the sequence is FLLSLACADLIIGTFSMNLYTT. Over 85–95 the chain is Extracellular; it reads YLLMGHWALGT. The chain crosses the membrane as a helical span at residues 96 to 121; sequence LACDLWLALDYVASNASVMNLLLISF. Cysteines 98 and 178 form a disulfide. Topologically, residues 122-142 are cytoplasmic; that stretch reads DRYFSVTRPLSYRAKRTPRRA. A helical membrane pass occupies residues 143–164; that stretch reads ALMIGLAWLVSFVLWAPAILFW. Residues 165 to 185 are Extracellular-facing; it reads QYLVGERTVLAGQCYIQFLSQ. The chain crosses the membrane as a helical span at residues 186–209; sequence PIITFGTAMAAFYLPVTVMCTLYW. Topologically, residues 210-366 are cytoplasmic; the sequence is RIYRETENRA…LVKEKKAART (157 aa). Disordered regions lie at residues 225 to 256, 274 to 297, and 310 to 351; these read LQGSETPGKGGGSSSSSERSQPGAEGSPETPP, WKEEEEEDEGSMESLTSSEGEEPG, and EAQA…QLAK. Thr-230 bears the Phosphothreonine mark. Positions 238–247 are enriched in low complexity; it reads SSSSERSQPG. Positions 328–343 are enriched in basic residues; sequence RPTKKGRDRAGKGQKP. Residues 367–390 form a helical membrane-spanning segment; that stretch reads LSAILLAFILTWTPYNIMVLVSTF. Topologically, residues 391–397 are extracellular; it reads CKDCVPE. Residues 398–420 traverse the membrane as a helical segment; the sequence is TLWELGYWLCYVNSTINPMCYAL. The Cytoplasmic segment spans residues 421 to 460; that stretch reads CNKAFRDTFRLLLLCRWDKRRWRKIPKRPGSVHRTPSRQC. A Phosphothreonine modification is found at Thr-428. Phosphoserine is present on Ser-451. The residue at position 455 (Thr-455) is a Phosphothreonine. Ser-457 is modified (phosphoserine).

Belongs to the G-protein coupled receptor 1 family. Muscarinic acetylcholine receptor subfamily. CHRM1 sub-subfamily. Interacts with GPRASP2. Interacts with TMEM147.

Its subcellular location is the cell membrane. The protein localises to the postsynaptic cell membrane. Functionally, the muscarinic acetylcholine receptor mediates various cellular responses, including inhibition of adenylate cyclase, breakdown of phosphoinositides and modulation of potassium channels through the action of G proteins. Primary transducing effect is Pi turnover. This is Muscarinic acetylcholine receptor M1 (CHRM1) from Homo sapiens (Human).